Here is a 141-residue protein sequence, read N- to C-terminus: Large-conductance mechanosensitive channel (141 aa).

3 helical membrane passes run 14-34 (VVDL…VNSL), 38-58 (VIMP…YYIP), and 82-102 (GQFL…FMVI).

Belongs to the MscL family. Homopentamer.

The protein localises to the cell inner membrane. In terms of biological role, channel that opens in response to stretch forces in the membrane lipid bilayer. May participate in the regulation of osmotic pressure changes within the cell. The protein is Large-conductance mechanosensitive channel of Methylorubrum extorquens (strain CM4 / NCIMB 13688) (Methylobacterium extorquens).